The following is a 117-amino-acid chain: Holo-[acyl-carrier-protein] synthase (117 aa).

Positions 6 and 55 each coordinate Mg(2+).

This sequence belongs to the P-Pant transferase superfamily. AcpS family. Requires Mg(2+) as cofactor.

Its subcellular location is the cytoplasm. It carries out the reaction apo-[ACP] + CoA = holo-[ACP] + adenosine 3',5'-bisphosphate + H(+). Its function is as follows. Transfers the 4'-phosphopantetheine moiety from coenzyme A to a Ser of acyl-carrier-protein. The chain is Holo-[acyl-carrier-protein] synthase from Chlorobaculum parvum (strain DSM 263 / NCIMB 8327) (Chlorobium vibrioforme subsp. thiosulfatophilum).